Reading from the N-terminus, the 248-residue chain is ATP synthase subunit a (248 aa).

6 helical membrane passes run Ile-25 to Met-45, Phe-83 to Ile-103, Leu-113 to Ala-133, Leu-142 to Ile-162, Phe-192 to Gly-212, and Ile-215 to Leu-235.

Belongs to the ATPase A chain family. In terms of assembly, F-type ATPases have 2 components, CF(1) - the catalytic core - and CF(0) - the membrane proton channel. CF(1) has five subunits: alpha(3), beta(3), gamma(1), delta(1), epsilon(1). CF(0) has four main subunits: a, b, b' and c.

The protein resides in the cell inner membrane. Its function is as follows. Key component of the proton channel; it plays a direct role in the translocation of protons across the membrane. This is ATP synthase subunit a from Rhodopseudomonas palustris (strain HaA2).